Consider the following 209-residue polypeptide: Peroxiredoxin (209 aa).

The 155-residue stretch at 2–156 (PLIGDKFPEM…IVRMIRAFRV (155 aa)) folds into the Thioredoxin domain. C44 (cysteine sulfenic acid (-SOH) intermediate) is an active-site residue. R119 lines the substrate pocket. C198 and C204 are joined by a disulfide.

It belongs to the peroxiredoxin family. Prx6 subfamily. Homodecamer. Pentamer of dimers that assemble into a ring structure.

It is found in the cytoplasm. The catalysed reaction is a hydroperoxide + [thioredoxin]-dithiol = an alcohol + [thioredoxin]-disulfide + H2O. In terms of biological role, thiol-specific peroxidase that catalyzes the reduction of hydrogen peroxide and organic hydroperoxides to water and alcohols, respectively. Plays a role in cell protection against oxidative stress by detoxifying peroxides. The polypeptide is Peroxiredoxin (Methanothermobacter thermautotrophicus (strain ATCC 29096 / DSM 1053 / JCM 10044 / NBRC 100330 / Delta H) (Methanobacterium thermoautotrophicum)).